The primary structure comprises 429 residues: 4-hydroxy-3-methylbut-2-en-1-yl diphosphate synthase (flavodoxin) (429 aa).

Positions 323, 326, 369, and 376 each coordinate [4Fe-4S] cluster.

This sequence belongs to the IspG family. The cofactor is [4Fe-4S] cluster.

The catalysed reaction is (2E)-4-hydroxy-3-methylbut-2-enyl diphosphate + oxidized [flavodoxin] + H2O + 2 H(+) = 2-C-methyl-D-erythritol 2,4-cyclic diphosphate + reduced [flavodoxin]. It functions in the pathway isoprenoid biosynthesis; isopentenyl diphosphate biosynthesis via DXP pathway; isopentenyl diphosphate from 1-deoxy-D-xylulose 5-phosphate: step 5/6. Converts 2C-methyl-D-erythritol 2,4-cyclodiphosphate (ME-2,4cPP) into 1-hydroxy-2-methyl-2-(E)-butenyl 4-diphosphate. This chain is 4-hydroxy-3-methylbut-2-en-1-yl diphosphate synthase (flavodoxin), found in Wolbachia sp. subsp. Brugia malayi (strain TRS).